Here is a 54-residue protein sequence, read N- to C-terminus: Large ribosomal subunit protein bL33 (54 aa).

This sequence belongs to the bacterial ribosomal protein bL33 family.

The chain is Large ribosomal subunit protein bL33 from Elusimicrobium minutum (strain Pei191).